A 120-amino-acid chain; its full sequence is MSKQPDKQRKSQRRAPLHERHKQVRATLSADLREEYGQRNVRVNAGDTVEVLRGDFAGEEGEVINVDLDKAVIHVEDVTLEKTDGEEVPRPLDTSNVRVTDLDLEDEKREARLESEDDSA.

A disordered region spans residues 1–26; sequence MSKQPDKQRKSQRRAPLHERHKQVRA. Residues 10-24 are compositionally biased toward basic residues; that stretch reads KSQRRAPLHERHKQV.

Belongs to the universal ribosomal protein uL24 family. In terms of assembly, part of the 50S ribosomal subunit. Interacts weakly with protein L4.

One of two assembly initiator proteins, it binds directly to the 5'-end of the 23S rRNA, where it nucleates assembly of the 50S subunit. Functionally, stabilizes the tertiary rRNA structure within the 23S rRNA domain (domain I) to which it binds. Located at the polypeptide exit tunnel on the outside of the subunit. The protein is Large ribosomal subunit protein uL24 (rpl24) of Haloarcula marismortui (strain ATCC 43049 / DSM 3752 / JCM 8966 / VKM B-1809) (Halobacterium marismortui).